Reading from the N-terminus, the 170-residue chain is ATP synthase subunit b (170 aa).

Residues glycine 15–glycine 37 form a helical membrane-spanning segment.

The protein belongs to the ATPase B chain family. In terms of assembly, F-type ATPases have 2 components, F(1) - the catalytic core - and F(0) - the membrane proton channel. F(1) has five subunits: alpha(3), beta(3), gamma(1), delta(1), epsilon(1). F(0) has three main subunits: a(1), b(2) and c(10-14). The alpha and beta chains form an alternating ring which encloses part of the gamma chain. F(1) is attached to F(0) by a central stalk formed by the gamma and epsilon chains, while a peripheral stalk is formed by the delta and b chains. The F(1)F(0) complex interacts with SpoIIIJ and YqjG; YqgA is found in the same complex.

It is found in the cell membrane. Its function is as follows. F(1)F(0) ATP synthase produces ATP from ADP in the presence of a proton or sodium gradient. F-type ATPases consist of two structural domains, F(1) containing the extramembraneous catalytic core and F(0) containing the membrane proton channel, linked together by a central stalk and a peripheral stalk. During catalysis, ATP synthesis in the catalytic domain of F(1) is coupled via a rotary mechanism of the central stalk subunits to proton translocation. Component of the F(0) channel, it forms part of the peripheral stalk, linking F(1) to F(0). The sequence is that of ATP synthase subunit b from Bacillus subtilis (strain 168).